The sequence spans 240 residues: Demethylmenaquinone methyltransferase (240 aa).

S-adenosyl-L-methionine is bound by residues Thr62, Asp80, 102–103 (DA), and Ser119.

The protein belongs to the class I-like SAM-binding methyltransferase superfamily. MenG/UbiE family.

It catalyses the reaction a 2-demethylmenaquinol + S-adenosyl-L-methionine = a menaquinol + S-adenosyl-L-homocysteine + H(+). The protein operates within quinol/quinone metabolism; menaquinone biosynthesis; menaquinol from 1,4-dihydroxy-2-naphthoate: step 2/2. In terms of biological role, methyltransferase required for the conversion of demethylmenaquinol (DMKH2) to menaquinol (MKH2). The protein is Demethylmenaquinone methyltransferase of Beutenbergia cavernae (strain ATCC BAA-8 / DSM 12333 / CCUG 43141 / JCM 11478 / NBRC 16432 / NCIMB 13614 / HKI 0122).